The sequence spans 616 residues: MIINRRILKSFEEISHSLEESLREVAFDSQQQLIQDVREENEELSRLQDQLQLIRSIVEKICISIKTDNIDSYCSVPFDLLYNICKDIADPSSFEDGDLQYLVSQAIFEYIILLCYYSVTNECVQGLPAVYEAEQYYKTVSDSILKSFLYCLQNSVSTIRLLSQTVLKDVNKKKLSHQKWSLKALSVDLLEKIRPRINKFMVIRNFRFVGLPKKPIEIASLVSDIPRGIVHERLDMVTQSSKYYTIKLGQLITEFDQQPEENGMFTEVHLPNYERRLKSLQDFFGLAMSDSNLLDVIRCSAKFHKDHPLRRFTKPSILTRYWPSILLCLLYGPSSVMSLWNSRYFIQDFIKTNVVDFAKGLILNWLWAPLKQVWSTVKHDEGSAISVTSQETLNSDMDSLTRMIVSFVVDNSDSTSNSPIDPILLSTKVEHGDLTEFMEIYETQLHHPIKNIATGGLVRSLLIQLQKTKVDGSMALNGIDKMLKSQQLVFGVVALSPALVILYSSIVALKRFVKLGNVWSNEKRYREQISISLNNVERVLNYSKQGADADEEHLNQGLLVIEVSNLYKLGSFLIPRSRKKEWFRDVEELVDTNLDSGAHINVVNRIYHVYGRFLIH.

Ser-29 is modified (phosphoserine). 2 consecutive transmembrane segments (helical) span residues Tyr-321–Asn-341 and Leu-488–Ala-508.

This sequence belongs to the NCA2 family.

It is found in the mitochondrion membrane. Functionally, involved in the mitochondrial expression of subunits 6 and 8 of the F0-F1 ATP synthase. The polypeptide is Nuclear control of ATPase protein 2 (NCA2) (Saccharomyces cerevisiae (strain ATCC 204508 / S288c) (Baker's yeast)).